The primary structure comprises 279 residues: MLKVGLPLGACARSWKSVRMASCGMARRNPLDNKVALVTASTDGIGFAIARRLAQDGAHVVVSSRKQQNVDRAVATLKGEGLSVTGTVCHVGKAEDRERLVATAVKLHGGVDILISNAAVSPFFGSLMDVPEEVWDKILDVNVKATALLTKAVVPEMAKRGGGSIVIVSSIAAYSPFPSLGPYNVSKTALLGLTKNLALELAESNVRVNCLAPGLIRTSFSRVLWEDPARQESIKATFQIKRIGKPEECAGIVSFLCSEDASYITGETVVVAGGSLSHL.

NADP(+) is bound at residue 37 to 61; the sequence is LVTASTDGIGFAIARRLAQDGAHVV. Residue K93 is modified to N6-acetyllysine; alternate. K93 is subject to N6-succinyllysine; alternate. N6-acetyllysine is present on K106. S170 serves as a coordination point for substrate. Y183 functions as the Proton acceptor in the catalytic mechanism. Residue K187 coordinates NADP(+). S221 carries the phosphoserine modification. K235 carries the post-translational modification N6-succinyllysine. The Peroxisomal targeting signal motif lies at 277 to 279; sequence SHL.

This sequence belongs to the short-chain dehydrogenases/reductases (SDR) family. In terms of assembly, homotetramer.

It localises to the peroxisome. The catalysed reaction is a secondary alcohol + NADP(+) = a ketone + NADPH + H(+). The enzyme catalyses 3alpha-hydroxy-5beta-pregnan-20-one + NADP(+) = 5beta-pregnan-3,20-dione + NADPH + H(+). It carries out the reaction 5beta-dihydrotestosterone + NADPH + H(+) = 5beta-androstane-3alpha,17beta-diol + NADP(+). It catalyses the reaction all-trans-retinol + NADP(+) = all-trans-retinal + NADPH + H(+). The catalysed reaction is isatin + NADPH + H(+) = 3-hydroxyindolin-2-one + NADP(+). Functionally, NADPH-dependent oxidoreductase which catalyzes the reduction of a variety of compounds bearing carbonyl groups including ketosteroids, alpha-dicarbonyl compounds, aldehydes, aromatic ketones and quinones. Reduces all-trans-retinal and 9-cis retinal. Reduces 3-ketosteroids and benzil into 3alpha-hydroxysteroids and S-benzoin, respectively, in contrast to the stereoselectivity of primates DHRS4s which produce 3beta-hydroxysteroids and R-benzoin. In the reverse reaction, catalyzes the NADP-dependent oxidation of 3alpha-hydroxysteroids and alcohol, but with much lower efficiency. Involved in the metabolism of 3alpha-hydroxysteroids, retinoid, isatin and xenobiotic carbonyl compounds. The sequence is that of Dehydrogenase/reductase SDR family member 4 (DHRS4) from Bos taurus (Bovine).